Reading from the N-terminus, the 1103-residue chain is Coatomer subunit beta (1103 aa).

HEAT repeat units follow at residues 51-89, 94-129, 130-166, 247-284, 322-359, 365-404, and 405-441; these read EAYTRLLMTVIRYAMPSKDKRVKKLTQLYLEIVGKCRPD, EEMILICNALRNDLMSPNEYVRGSTLRLLSKIRQFK, VLEPLVEAILQNLTHRHSYVRRNAVMCVYSIVKNFGL, QQKAGLLRLIVSILPNTLPSVAYEGACSLLALSRAPVS, RTMEEFVIDLLRGLQTPSLEVRRKILDLVLQIVGKNSV, VLKRELLRTAEPEQLTVPRTMEYRRLLIKAVHSCCTRFPE, and AAASVVNVLIDFPGDPDVTTATEVAVVVRELVATCVH.

In terms of assembly, oligomeric complex that consists of at least the alpha, beta, beta', gamma, delta, epsilon and zeta subunits.

It is found in the cytoplasm. It localises to the golgi apparatus membrane. Its subcellular location is the cytoplasmic vesicle. The protein resides in the COPI-coated vesicle membrane. The coatomer is a cytosolic protein complex that binds to dilysine motifs and reversibly associates with Golgi non-clathrin-coated vesicles, which further mediate biosynthetic protein transport from the ER, via the Golgi up to the trans Golgi network. Coatomer complex is required for budding from Golgi membranes, and is essential for the retrograde Golgi-to-ER transport of dilysine-tagged proteins. This chain is Coatomer subunit beta, found in Toxoplasma gondii.